A 279-amino-acid polypeptide reads, in one-letter code: 4-diphosphocytidyl-2-C-methyl-D-erythritol kinase (279 aa).

Lys10 is an active-site residue. ATP is bound at residue Pro91 to Ala101. Asp130 is an active-site residue.

Belongs to the GHMP kinase family. IspE subfamily.

The enzyme catalyses 4-CDP-2-C-methyl-D-erythritol + ATP = 4-CDP-2-C-methyl-D-erythritol 2-phosphate + ADP + H(+). It participates in isoprenoid biosynthesis; isopentenyl diphosphate biosynthesis via DXP pathway; isopentenyl diphosphate from 1-deoxy-D-xylulose 5-phosphate: step 3/6. Its function is as follows. Catalyzes the phosphorylation of the position 2 hydroxy group of 4-diphosphocytidyl-2C-methyl-D-erythritol. The chain is 4-diphosphocytidyl-2-C-methyl-D-erythritol kinase from Ruegeria pomeroyi (strain ATCC 700808 / DSM 15171 / DSS-3) (Silicibacter pomeroyi).